Reading from the N-terminus, the 568-residue chain is Cytochrome P450 monooxygenase 41 (568 aa).

A helical membrane pass occupies residues 21–41; sequence LTSLVPLILSVMVCLIATVTI. Residues asparagine 321 and asparagine 377 are each glycosylated (N-linked (GlcNAc...) asparagine). Cysteine 514 provides a ligand contact to heme.

The protein belongs to the cytochrome P450 family. It depends on heme as a cofactor.

It is found in the membrane. The protein operates within secondary metabolite biosynthesis. Functionally, cytochrome P450 monooxygenase that is able to use 3,5-dimethoxy-trans-stilbene and 3,5,4'-trimethoxy-trans-stilbene as substrates for oxidation. This chain is Cytochrome P450 monooxygenase 41, found in Postia placenta (strain ATCC 44394 / Madison 698-R) (Brown rot fungus).